The sequence spans 243 residues: Juxtaposed with another zinc finger protein 1 (243 aa).

The segment at 12 to 37 adopts a C2H2-type 1 zinc-finger fold; it reads NTCRFGGCGLHFPTLADLIEHIEDNH. Positions 39 to 79 are required for interaction with NR2C2; the sequence is DTDPRVLEKQELQQPTYVALSYINRFMTDAARREQESLKKK. A compositionally biased stretch (polar residues) spans 89 to 108; that stretch reads SSSVSRGNVSTPPRHSSGSL. The disordered stretch occupies residues 89–151; that stretch reads SSSVSRGNVS…SDSDESWTTE (63 aa). Phosphothreonine occurs at positions 109 and 113. Residues 118–130 show a composition bias toward low complexity; that stretch reads PSSSFRSSTPTGS. Acidic residues predominate over residues 131–148; it reads EYDEEEVDYEESDSDESW. Residues 173 to 198 form a C2H2-type 2 zinc finger; it reads FACPVPGCKKRYKNVNGIKYHAKNGH. The C2H2-type 3; degenerate zinc finger occupies 208-230; sequence FKCRCGKSYKTAQGLRHHTINFH.

In terms of assembly, interacts with NR2C2 (via ligand-binding region). As to expression, highest expression in testis with moderate levels in colon, placenta, prostate and ovary and low levels in brain, spleen, liver and small intestine.

It is found in the nucleus. Its function is as follows. Acts as a transcriptional corepressor of orphan nuclear receptor NR2C2. Inhibits expression of the gluconeogenesis enzyme PCK2 through inhibition of NR2C2 activity. Also involved in transcriptional activation of NAMPT by promoting expression of PPARA and PPARD. Plays a role in lipid metabolism by suppressing lipogenesis, increasing lipolysis and decreasing lipid accumulation in adipose tissue. Plays a role in glucose homeostasis by improving glucose metabolism and insulin sensitivity. In Homo sapiens (Human), this protein is Juxtaposed with another zinc finger protein 1.